Reading from the N-terminus, the 3165-residue chain is Protein eyes shut homolog (3165 aa).

The signal sequence occupies residues 1-21 (MTDKSIIILSLMVFHSSFING). 4 N-linked (GlcNAc...) asparagine glycosylation sites follow: Asn42, Asn105, Asn117, and Asn166. 3 EGF-like domains span residues 170–212 (KQQF…KYCQ), 213–254 (ELDA…KNCS), and 256–292 (IIVQ…PFCE). 9 cysteine pairs are disulfide-bonded: Cys174/Cys189, Cys183/Cys200, Cys202/Cys211, Cys217/Cys228, Cys222/Cys242, Cys244/Cys253, Cys260/Cys270, Cys265/Cys280, and Cys282/Cys291. 3 N-linked (GlcNAc...) asparagine glycosylation sites follow: Asn252, Asn269, and Asn272. N-linked (GlcNAc...) asparagine glycosylation is found at Asn311 and Asn343. EGF-like domains follow at residues 332–368 (DVSE…LLCK) and 370–406 (FQTS…KNCE). Intrachain disulfides connect Cys341/Cys356 and Cys358/Cys367. N-linked (GlcNAc...) asparagine glycosylation is present at Asn382. Residues Cys396 and Cys405 are joined by a disulfide bond. Asn506, Asn520, Asn521, Asn566, and Asn573 each carry an N-linked (GlcNAc...) asparagine glycan. EGF-like domains follow at residues 566–602 (NITD…RLCV), 604–641 (NVDY…NICE), and 643–679 (DIED…TRCE). 2 cysteine pairs are disulfide-bonded: Cys592-Cys601 and Cys608-Cys620. 2 N-linked (GlcNAc...) asparagine glycosylation sites follow: Asn611 and Asn628. An intrachain disulfide couples Cys629 to Cys640. N-linked (GlcNAc...) asparagine glycosylation occurs at Asn654. 4 disulfide bridges follow: Cys669/Cys678, Cys685/Cys696, Cys690/Cys705, and Cys707/Cys719. The EGF-like 9; calcium-binding domain maps to 681–720 (DLDECALHPCKSGATCIDQPGNYFCQCGPPFKVVDGFSCL). One can recognise an EGF-like 10 domain in the interval 733 to 769 (NIDNCILNAFEHNSTYKDLHLSYQCVCLSGWEGNFCE). The N-linked (GlcNAc...) asparagine glycan is linked to Asn745. Intrachain disulfides connect Cys759–Cys768, Cys775–Cys786, Cys780–Cys795, Cys797–Cys806, Cys813–Cys824, Cys818–Cys835, Cys837–Cys846, Cys853–Cys866, Cys860–Cys876, Cys878–Cys887, Cys894–Cys905, Cys899–Cys914, Cys916–Cys925, Cys932–Cys943, Cys937–Cys952, Cys954–Cys963, Cys970–Cys981, Cys975–Cys990, Cys992–Cys1001, Cys1008–Cys1019, Cys1013–Cys1028, Cys1030–Cys1039, Cys1046–Cys1056, Cys1051–Cys1065, Cys1067–Cys1076, Cys1083–Cys1094, Cys1088–Cys1103, Cys1105–Cys1114, Cys1121–Cys1137, Cys1131–Cys1147, Cys1149–Cys1158, Cys1165–Cys1176, Cys1170–Cys1185, and Cys1187–Cys1196. The EGF-like 11; calcium-binding domain maps to 771-807 (ESNECKMNPCKNNSTCTDLYKSYRCECTSGWTGQNCS). 3 N-linked (GlcNAc...) asparagine glycosylation sites follow: Asn782, Asn783, and Asn805. 3 consecutive EGF-like domains span residues 809–847 (EINE…QFCH), 849–888 (RYNP…KHCE), and 890–926 (DVKE…SLCE). N-linked (GlcNAc...) asparagine glycans are attached at residues Asn862 and Asn863. Residues 928–964 (EINECSSEPCKNNGTCVDLTNRFFCNCEPGYHGPFCE) enclose the EGF-like 15; calcium-binding domain. A glycan (N-linked (GlcNAc...) asparagine) is linked at Asn940. The EGF-like 16 domain maps to 966-1002 (EVNKCKISPCLDEENCVYRTDRYNCLCAPGYTGINCE). One can recognise an EGF-like 17; calcium-binding domain in the interval 1004 to 1040 (NLDECLSEPCLHDGVCIDGINHYTCDCKSGFFGTHCE). 3 EGF-like domains span residues 1042–1077 (NAND…IQCK), 1079–1115 (KIND…AYCE), and 1117–1159 (SIDN…QFCE). The EGF-like 21; calcium-binding domain maps to 1161–1197 (NINECSSSPCLHGANCEDHINGYVCKCQPGWSGHHCE). N-linked (GlcNAc...) asparagine glycans are attached at residues Asn1509, Asn1906, Asn1941, and Asn2033. In terms of domain architecture, Laminin G-like 1 spans 1883-2063 (FSCVCYYGDS…AVRNYHINNC (181 aa)). Intrachain disulfides connect Cys2037-Cys2063, Cys2103-Cys2114, Cys2108-Cys2128, and Cys2130-Cys2139. One can recognise an EGF-like 22 domain in the interval 2099–2140 (APSVCQEDVCHNGGTCRPIFLSSGIVSFQCDCPLHFTGRFCE). Residues 2145-2339 (LFFPSFSGNS…NIENCHVPWC (195 aa)) enclose the Laminin G-like 2 domain. Residues Asn2170, Asn2185, and Asn2228 are each glycosylated (N-linked (GlcNAc...) asparagine). 6 disulfides stabilise this stretch: Cys2308–Cys2339, Cys2339–Cys2350, Cys2344–Cys2359, Cys2375–Cys2386, Cys2380–Cys2396, and Cys2398–Cys2407. EGF-like domains follow at residues 2335-2368 (HVPW…YSGK) and 2371-2408 (QFAS…PLCT). A glycan (N-linked (GlcNAc...) asparagine) is linked at Asn2347. N-linked (GlcNAc...) asparagine glycans are attached at residues Asn2412, Asn2453, Asn2484, Asn2506, and Asn2532. In terms of domain architecture, Laminin G-like 3 spans 2419 to 2609 (SGTDAFGYTS…PNAGRSVGQC (191 aa)). Intrachain disulfides connect Cys2576/Cys2609, Cys2614/Cys2625, and Cys2619/Cys2634. EGF-like domains follow at residues 2610–2646 (HASP…AFCT) and 2648–2689 (TVSI…IYCE). A glycan (N-linked (GlcNAc...) asparagine) is linked at Asn2635. Intrachain disulfides connect Cys2636-Cys2645, Cys2652-Cys2668, Cys2662-Cys2677, and Cys2679-Cys2688. The Laminin G-like 4 domain maps to 2717-2895 (DPSFRSSELS…AKGGSNVGDC (179 aa)). Residues Asn2775, Asn2800, and Asn2824 are each glycosylated (N-linked (GlcNAc...) asparagine). 4 disulfide bridges follow: Cys2868–Cys2895, Cys2900–Cys2911, Cys2905–Cys2920, and Cys2922–Cys2931. EGF-like domains follow at residues 2896 to 2932 (DGTA…NICN) and 2933 to 2970 (QSAY…RYCE). Residue Asn2914 is glycosylated (N-linked (GlcNAc...) asparagine). Residue Asn2932 is glycosylated (N-linked (GlcNAc...) asparagine). 3 disulfides stabilise this stretch: Cys2937–Cys2948, Cys2942–Cys2958, and Cys2960–Cys2969. Residues Asn2971, Asn3006, Asn3036, Asn3057, Asn3073, and Asn3082 are each glycosylated (N-linked (GlcNAc...) asparagine). One can recognise a Laminin G-like 5 domain in the interval 2975–3165 (FTTAKFMGNS…YDGDEQNEVT (191 aa)).

Belongs to the EYS family. Expressed in retina (at protein level).

It localises to the cell projection. The protein localises to the cilium. The protein resides in the photoreceptor outer segment. Its subcellular location is the cytoplasm. It is found in the cytoskeleton. It localises to the cilium axoneme. The protein localises to the microtubule organizing center. The protein resides in the centrosome. Its subcellular location is the secreted. It is found in the extracellular space. It localises to the extracellular matrix. The protein localises to the interphotoreceptor matrix. Required to maintain the integrity of photoreceptor cells. Specifically required for normal morphology of the photoreceptor ciliary pocket, and might thus facilitate protein trafficking between the photoreceptor inner and outer segments via the transition zone. This is Protein eyes shut homolog from Macaca fascicularis (Crab-eating macaque).